A 677-amino-acid polypeptide reads, in one-letter code: Methionine--tRNA ligase (677 aa).

Positions 15 to 25 (PYANGSIHLGH) match the 'HIGH' region motif. Residues Cys146, Cys149, Cys159, and Cys162 each coordinate Zn(2+). The 'KMSKS' region signature appears at 333-337 (KMSKS). ATP is bound at residue Lys336. One can recognise a tRNA-binding domain in the interval 575–677 (DFAKVDLRVA…AGAKPGHQVK (103 aa)).

The protein belongs to the class-I aminoacyl-tRNA synthetase family. MetG type 1 subfamily. Homodimer. The cofactor is Zn(2+).

It is found in the cytoplasm. The enzyme catalyses tRNA(Met) + L-methionine + ATP = L-methionyl-tRNA(Met) + AMP + diphosphate. Functionally, is required not only for elongation of protein synthesis but also for the initiation of all mRNA translation through initiator tRNA(fMet) aminoacylation. The polypeptide is Methionine--tRNA ligase (Escherichia coli O81 (strain ED1a)).